The primary structure comprises 850 residues: MALPSSSLSSQIHTGATTQCIPHFHGSLNAGTSAGKRRSLYLRWGKGPSKIVACAGQDPFSVPTLVKREFPPGFWKDHVIESLMPSYKVAPSDEKRIETLITEIKNMFRSMGYGETNPSAYDTAWVARIPAVDGSEKPQFPETLEWILQNQLKDGSWGEEFYFLAYDRILATLACIITLTIWQTGDTQVQKGIEFFKTQAGKIEEEADSHRPSGFEIVFPAMLKEAKALGLALPYELPFIQQIIEKREAKLQRLPSDLLYALPTTLLYSLEGLQEIVDWEKIMKLQSKDRSFLSSPSSTAAVFMRTGNKKCLEFLNFVLKKFGNHVPCHYPLDLFERLWAVDTVERLGIDHHFKEEIKDALDYVYSHWDERGIGWARENPVPDIDDTAMGLRILRLHGYNVSSDVLKTFRDENGEFFCFLGQTQRGVTDMLNVNRCSHVAFPGETIMEEAKLCTERYLRNALEDTGAFDKWALKKNIRGEVEYALKYPWHRSMPRLEARSYIENYGPNDVWLGKTMYMMPNISNEKYLELAKLDFNRVQFFHRQELQDIRRWWNSSGFSQLGFTRERVAEIYFSPASFLFEPEFATCRAVYTKTSNFTVILDDLYDAHGTLDNLKLFSESVKRWDLSLVDQMPQDMKICFKGFYNTFNEIAEEGRKRQGRDVLSYIQKVWEVQLEAYTKEAEWSAVRYVPSYDEYIENASVSIALGTVVLISALFTGEILTDDILSKIGRDSRFLYLMGLTGRLVNDTKTYQAERGQGEVASAVQCYMKDHPEISEEEALKHVYTIMDNALDELNREFVNNRDVPDTCRRLVFETARIMQLFYMDGDGLTLSHNMEIKEHVKNCLFQPVA.

Residues 1–52 constitute a chloroplast transit peptide; that stretch reads MALPSSSLSSQIHTGATTQCIPHFHGSLNAGTSAGKRRSLYLRWGKGPSKIV. Lysine 250 is a substrate binding site. Aspartate 383 and aspartate 385 together coordinate Mg(2+). A DXDD motif motif is present at residues 383–386; sequence DIDD. Position 470 (lysine 470) interacts with substrate. Mg(2+) contacts are provided by aspartate 602, aspartate 606, asparagine 746, threonine 750, and glutamate 754. Residues 602 to 606 carry the DDXXD motif motif; sequence DDLYD.

It belongs to the terpene synthase family. Tpsd subfamily. Mg(2+) is required as a cofactor.

Its subcellular location is the plastid. It localises to the chloroplast. The enzyme catalyses (2E,6E,10E)-geranylgeranyl diphosphate = (+)-copalyl diphosphate. The catalysed reaction is (+)-copalyl diphosphate = abieta-7,13-diene + diphosphate. It catalyses the reaction (+)-copalyl diphosphate = abieta-8(14),12-diene + diphosphate. It carries out the reaction (+)-copalyl diphosphate = neoabietadiene + diphosphate. The protein operates within terpene metabolism; oleoresin biosynthesis. Involved in defensive oleoresin formation in conifers in response to insect attack or other injury. Involved in diterpene (C20) olefins biosynthesis. Bifunctional enzyme that catalyzes two sequential cyclizations of geranylgeranyl diphosphate (GGPP) to levopimaradiene. Levopimaradiene is the major products of the enzyme with abietadiene and neoabietadiene. No activity with farnesyl diphosphate (FPP) as substrate. The chain is Bifunctional levopimaradiene synthase, chloroplastic from Pinus contorta (Shore pine).